The sequence spans 280 residues: Ribosomal RNA large subunit methyltransferase J (280 aa).

S-adenosyl-L-methionine is bound by residues H19, H42, S100, E118, 143 to 144 (DG), and D164. D164 functions as the Proton acceptor in the catalytic mechanism.

It belongs to the RlmJ family. In terms of assembly, monomer.

It catalyses the reaction adenosine(2030) in 23S rRNA + S-adenosyl-L-methionine = N(6)-methyladenosine(2030) in 23S rRNA + S-adenosyl-L-homocysteine + H(+). Specifically methylates the adenine in position 2030 of 23S rRNA. Nascent 23S rRNA seems to be the natural substrate. Appears to be not necessary for ribosome assembly. Required for the utilization of extracellular DNA as the sole source of carbon and energy. The chain is Ribosomal RNA large subunit methyltransferase J from Escherichia coli (strain K12).